Here is a 391-residue protein sequence, read N- to C-terminus: Inactive polyketide synthase 2 (391 aa).

Cysteine 164 is an active-site residue.

Belongs to the thiolase-like superfamily. Chalcone/stilbene synthases family. In terms of assembly, homodimer.

This chain is Inactive polyketide synthase 2 (PKS2), found in Rubus idaeus (Raspberry).